A 337-amino-acid chain; its full sequence is Quercetin 2,3-dioxygenase (337 aa).

2 consecutive Cupin type-2 domains span residues 55–110 and 226–281; these read KGDA…MQSH and PKGD…RLDS. His62, His64, Glu69, His103, His234, His236, Glu241, and His275 together coordinate Fe cation.

Homodimer. It depends on Fe(2+) as a cofactor.

It carries out the reaction quercetin + O2 = 2-(3,4-dihydroxybenzoyloxy)-4,6-dihydroxybenzoate + CO. It participates in flavonoid metabolism; quercetin degradation. In terms of biological role, performs the first step in the degradation of the flavonoid quercetin by a dioxygenase reaction. The enzyme catalyzes the cleavage of the O-heteroaromatic ring of the flavonol quercetin yielding the depside 2-protocatechuoyl-phloroglucinol carboxylic acid and carbon monoxide. This involves the remarkable dioxygenolytic cleavage of two carbon-carbon bonds. In Bacillus subtilis (strain 168), this protein is Quercetin 2,3-dioxygenase (qdoI).